A 1684-amino-acid polypeptide reads, in one-letter code: A-kinase anchor protein 12 (1684 aa).

The interval 1-124 (MGAGSSTEQR…DITKDEQEET (124 aa)) is disordered. Residue Gly2 is the site of N-myristoyl glycine attachment. A phosphoserine mark is found at Ser11, Ser18, Ser22, and Ser27. Residues 30–48 (GPAAEASGAAGDPADADPA) are compositionally biased toward low complexity. The segment covering 75–86 (ESQDGQEEEVTV) has biased composition (acidic residues). Over residues 89 to 105 (VGQRESEDVKEKDRAKE) the composition is skewed to basic and acidic residues. A Phosphoserine modification is found at Ser136. 2 disordered regions span residues 175-281 (SDTV…ETTS) and 296-353 (KKTS…SADY). A compositionally biased stretch (basic and acidic residues) spans 212-227 (ASKESELKQSTEKQEG). Positions 228-247 (TLKQAQSSTEIPLQAESGQG) are enriched in polar residues. Ser234 and Ser244 each carry phosphoserine. Residues 251–266 (EAAKDGEENREKEPTK) are compositionally biased toward basic and acidic residues. Residues 253 to 543 (AKDGEENREK…QHIQTESPES (291 aa)) are involved in PKC-binding. Ser270 and Ser273 each carry phosphoserine. A compositionally biased stretch (polar residues) spans 270–281 (SPTSPVSNETTS). Residues 302–320 (KPKEDDLETSEKRKEQEAE) are compositionally biased toward basic and acidic residues. The span at 321 to 342 (KVDEEEGEKTEPAPAEEQEPAE) shows a compositional bias: acidic residues. Thr330 is subject to Phosphothreonine. Ser350 carries the post-translational modification Phosphoserine. Phosphotyrosine is present on Tyr353. Ser371 and Ser467 each carry phosphoserine. The segment at 421 to 479 (GSGESLPPEKLAETQEVPQEAEPVEELMKTKEVCVSGGDHTQLTDLSPEEKMLPKHPEG) is disordered. Residues 468–478 (PEEKMLPKHPE) are compositionally biased toward basic and acidic residues. Phosphoserine occurs at positions 489, 505, and 507. Positions 492–825 (RIKVQGSPLK…INEDDPDVPA (334 aa)) are disordered. A compositionally biased stretch (low complexity) spans 497-511 (GSPLKKLFSSSGLKK). Residues 512-521 (LSGKKQKGKR) show a composition bias toward basic residues. Phosphoserine is present on residues Ser540, Ser543, Ser584, Ser598, Ser613, and Ser615. Residues 593–613 (ITPWASFKKMVTPKKRVRRPS) carry the AKAP CaM-binding 1 motif. Positions 611–625 (RPSESDKEEELDKVK) are enriched in basic and acidic residues. Low complexity predominate over residues 626 to 637 (SATLSSTESTAS). Thr628 is subject to Phosphothreonine. Ser630, Ser631, Ser634, and Ser637 each carry phosphoserine. A compositionally biased stretch (basic and acidic residues) spans 641–660 (DEVRAVGEEQRSEEPKRRVD). A phosphoserine mark is found at Ser682, Ser683, and Ser684. Residues 696 to 710 (DGHRAEEASKDKEAD) show a composition bias toward basic and acidic residues. Positions 714 to 723 (ASTQEQDQAH) are enriched in polar residues. A compositionally biased stretch (low complexity) spans 724–741 (GSSSPEPAGSPSEGEGVS). Phosphoserine occurs at positions 733, 745, 767, and 786. Positions 740-760 (VSTWESFKRLVTPRKKSKSKL) match the AKAP CaM-binding 2 motif. Residues 781–801 (EESWVSIKKFIPGRRKKRADG) carry the AKAP CaM-binding 3 motif. Thr871 is modified (phosphothreonine). Phosphoserine is present on Ser873. Residues 970 to 1001 (TEASGAEETTDMVSAVSQLSDSPDTTEEATPV) form a disordered region. Residues 980–992 (DMVSAVSQLSDSP) are compositionally biased toward polar residues. Lys1030 is covalently cross-linked (Glycyl lysine isopeptide (Lys-Gly) (interchain with G-Cter in SUMO1)). 4 disordered regions span residues 1055–1106 (VEED…VTED), 1121–1211 (LMEQ…DVLE), 1232–1365 (EGEA…DKAD), and 1391–1492 (TVAT…REKI). Position 1059 is a phosphoserine (Ser1059). The segment covering 1130 to 1176 (SSETLTDSETNGSTPLADSDTPNGTQQDETVDSQDSNAIAAVKQSQV) has biased composition (polar residues). Composition is skewed to basic and acidic residues over residues 1198 to 1210 (QEEH…RDVL) and 1239 to 1254 (DGEK…ELEV). The residue at position 1292 (Ser1292) is a Phosphoserine. Residues 1293–1331 (PEKREMGTDVEKEETETKTEQASEEHEQETAAPEHEGTH) are compositionally biased toward basic and acidic residues. Phosphoserine occurs at positions 1351, 1355, and 1357. A compositionally biased stretch (basic and acidic residues) spans 1467-1492 (QRSDEDNKPDAGPDAAGKESAAREKI). The RII-binding stretch occupies residues 1501 to 1514 (ELESKSNKIVQSVI). 2 positions are modified to phosphoserine: Ser1546 and Ser1645. A disordered region spans residues 1568 to 1684 (TLSAVAQEGL…QEPKGDLTES (117 aa)). Basic and acidic residues predominate over residues 1653–1684 (LTEEGDALKEEMNKAQTEEDDLQEPKGDLTES).

As to quaternary structure, binds to dimeric RII-alpha regulatory subunit of PKC. As to expression, isoform 1 is predominantly found in the nervous system. Isoform 3 is testis specific.

It is found in the cytoplasm. It localises to the cytoskeleton. The protein localises to the membrane. Its function is as follows. Anchoring protein that mediates the subcellular compartmentation of protein kinase A (PKA) and protein kinase C (PKC). This chain is A-kinase anchor protein 12 (Akap12), found in Mus musculus (Mouse).